The chain runs to 408 residues: LL-diaminopimelate aminotransferase (408 aa).

2 residues coordinate substrate: Y15 and G42. Pyridoxal 5'-phosphate contacts are provided by residues Y72, 108 to 109 (SK), Y132, N187, Y218, and 246 to 248 (SFS). 3 residues coordinate substrate: K109, Y132, and N187. K249 carries the N6-(pyridoxal phosphate)lysine modification. The pyridoxal 5'-phosphate site is built by R257 and N292. Substrate is bound by residues N292 and R388.

Belongs to the class-I pyridoxal-phosphate-dependent aminotransferase family. LL-diaminopimelate aminotransferase subfamily. In terms of assembly, homodimer. Requires pyridoxal 5'-phosphate as cofactor.

The enzyme catalyses (2S,6S)-2,6-diaminopimelate + 2-oxoglutarate = (S)-2,3,4,5-tetrahydrodipicolinate + L-glutamate + H2O + H(+). Its pathway is amino-acid biosynthesis; L-lysine biosynthesis via DAP pathway; LL-2,6-diaminopimelate from (S)-tetrahydrodipicolinate (aminotransferase route): step 1/1. Its function is as follows. Involved in the synthesis of meso-diaminopimelate (m-DAP or DL-DAP), required for both lysine and peptidoglycan biosynthesis. Catalyzes the direct conversion of tetrahydrodipicolinate to LL-diaminopimelate. This is LL-diaminopimelate aminotransferase from Prochlorococcus marinus (strain MIT 9312).